The chain runs to 560 residues: Vanillyl-alcohol oxidase (560 aa).

The FAD-binding PCMH-type domain maps to 67 to 272; that stretch reads DYFLASAIVA…TKIGIWLMPN (206 aa). Y108 is an active-site residue. At H422 the chain carries Tele-8alpha-FAD histidine. Residues Y503 and R504 contribute to the active site.

It to bacterial flavocytochrome p-cresol methyl hydroxylase. Homooctamer (tetramer of tightly interacting dimers). It depends on FAD as a cofactor.

It localises to the peroxisome. It is found in the cytoplasm. It catalyses the reaction 4-hydroxy-3-methoxy-benzenemethanol + O2 = vanillin + H2O2. Its activity is regulated as follows. Competitively inhibited by cinnamyl and coniferyl alcohols and by isoeugenol. Catalyzes the conversion of vanillin alcohol to vanillin, and also the conversion of a wide range of phenolic compounds bearing side chains of variable size at the para position of the aromatic ring. Crucial for the degradation of the secondary metabolites derived from the degradation of the lignin. Catalyzes besides the oxidation of 4-hydroxybenzyl alcohols, the oxidative deamination of 4-hydroxybenzylamines, the oxidative demethylation of 4-(methoxy-methyl)phenols and the oxidative hydration of 4-allylphenols. Most active with 4-allylphenols. The protein is Vanillyl-alcohol oxidase (VAOA) of Penicillium simplicissimum.